The sequence spans 299 residues: Tyrosine recombinase XerC (299 aa).

One can recognise a Core-binding (CB) domain in the interval 1–85 (MERQLDAYCE…AVRGLYHYLN (85 aa)). Residues 106–285 (RLPKTLDTDR…DFQHLATVYD (180 aa)) enclose the Tyr recombinase domain. Catalysis depends on residues R146, K170, H237, R240, and H263. Y272 functions as the O-(3'-phospho-DNA)-tyrosine intermediate in the catalytic mechanism.

The protein belongs to the 'phage' integrase family. XerC subfamily. As to quaternary structure, forms a cyclic heterotetrameric complex composed of two molecules of XerC and two molecules of XerD.

The protein resides in the cytoplasm. Functionally, site-specific tyrosine recombinase, which acts by catalyzing the cutting and rejoining of the recombining DNA molecules. The XerC-XerD complex is essential to convert dimers of the bacterial chromosome into monomers to permit their segregation at cell division. It also contributes to the segregational stability of plasmids. In Pseudomonas fluorescens, this protein is Tyrosine recombinase XerC.